We begin with the raw amino-acid sequence, 375 residues long: Transaldolase (375 aa).

K145 acts as the Schiff-base intermediate with substrate in catalysis.

It belongs to the transaldolase family. Type 2 subfamily.

It is found in the cytoplasm. It carries out the reaction D-sedoheptulose 7-phosphate + D-glyceraldehyde 3-phosphate = D-erythrose 4-phosphate + beta-D-fructose 6-phosphate. It functions in the pathway carbohydrate degradation; pentose phosphate pathway; D-glyceraldehyde 3-phosphate and beta-D-fructose 6-phosphate from D-ribose 5-phosphate and D-xylulose 5-phosphate (non-oxidative stage): step 2/3. Transaldolase is important for the balance of metabolites in the pentose-phosphate pathway. This chain is Transaldolase, found in Mycobacterium leprae (strain Br4923).